A 138-amino-acid polypeptide reads, in one-letter code: Large ribosomal subunit protein uL16 (138 aa).

Positions 1-13 (MLQPKRRKYRKEQ) are enriched in basic residues. Residues 1-20 (MLQPKRRKYRKEQKGRNTGI) form a disordered region.

This sequence belongs to the universal ribosomal protein uL16 family. As to quaternary structure, part of the 50S ribosomal subunit.

Binds 23S rRNA and is also seen to make contacts with the A and possibly P site tRNAs. The chain is Large ribosomal subunit protein uL16 from Paraburkholderia phytofirmans (strain DSM 17436 / LMG 22146 / PsJN) (Burkholderia phytofirmans).